The primary structure comprises 262 residues: NADP-dependent mannitol dehydrogenase (262 aa).

NADP(+)-binding residues include I23, D69, N96, and R129. S149 acts as the Proton donor in catalysis. NADP(+) is bound by residues Y169, K173, V202, T204, and Q206. The active-site Proton acceptor is Y169. K173 functions as the Lowers pKa of active site Tyr in the catalytic mechanism.

The protein belongs to the short-chain dehydrogenases/reductases (SDR) family. In terms of assembly, homotetramer.

The enzyme catalyses D-mannitol + NADP(+) = D-fructose + NADPH + H(+). This chain is NADP-dependent mannitol dehydrogenase (mtdH), found in Agaricus bisporus (White button mushroom).